Reading from the N-terminus, the 223-residue chain is Putative 3-methyladenine DNA glycosylase (223 aa).

It belongs to the DNA glycosylase MPG family.

The sequence is that of Putative 3-methyladenine DNA glycosylase from Rickettsia typhi (strain ATCC VR-144 / Wilmington).